A 320-amino-acid polypeptide reads, in one-letter code: Lipoyl synthase (320 aa).

7 residues coordinate [4Fe-4S] cluster: Cys-67, Cys-72, Cys-78, Cys-93, Cys-97, Cys-100, and Ser-307. Positions 79-296 (FNHGTATFMI…RDKANEMGFE (218 aa)) constitute a Radical SAM core domain.

The protein belongs to the radical SAM superfamily. Lipoyl synthase family. It depends on [4Fe-4S] cluster as a cofactor.

The protein localises to the cytoplasm. The catalysed reaction is [[Fe-S] cluster scaffold protein carrying a second [4Fe-4S](2+) cluster] + N(6)-octanoyl-L-lysyl-[protein] + 2 oxidized [2Fe-2S]-[ferredoxin] + 2 S-adenosyl-L-methionine + 4 H(+) = [[Fe-S] cluster scaffold protein] + N(6)-[(R)-dihydrolipoyl]-L-lysyl-[protein] + 4 Fe(3+) + 2 hydrogen sulfide + 2 5'-deoxyadenosine + 2 L-methionine + 2 reduced [2Fe-2S]-[ferredoxin]. It functions in the pathway protein modification; protein lipoylation via endogenous pathway; protein N(6)-(lipoyl)lysine from octanoyl-[acyl-carrier-protein]: step 2/2. Catalyzes the radical-mediated insertion of two sulfur atoms into the C-6 and C-8 positions of the octanoyl moiety bound to the lipoyl domains of lipoate-dependent enzymes, thereby converting the octanoylated domains into lipoylated derivatives. This Haemophilus influenzae (strain PittGG) protein is Lipoyl synthase.